The following is a 280-amino-acid chain: Pantothenate synthetase (280 aa).

Residue 31–38 (MGNLHAGH) participates in ATP binding. His-38 functions as the Proton donor in the catalytic mechanism. Gln-62 contributes to the (R)-pantoate binding site. Gln-62 lines the beta-alanine pocket. An ATP-binding site is contributed by 150–153 (GKKD). Gln-156 provides a ligand contact to (R)-pantoate. Residues Val-179 and 187–190 (MSSR) each bind ATP.

This sequence belongs to the pantothenate synthetase family. In terms of assembly, homodimer.

It localises to the cytoplasm. It catalyses the reaction (R)-pantoate + beta-alanine + ATP = (R)-pantothenate + AMP + diphosphate + H(+). Its pathway is cofactor biosynthesis; (R)-pantothenate biosynthesis; (R)-pantothenate from (R)-pantoate and beta-alanine: step 1/1. Functionally, catalyzes the condensation of pantoate with beta-alanine in an ATP-dependent reaction via a pantoyl-adenylate intermediate. The chain is Pantothenate synthetase from Xanthomonas euvesicatoria pv. vesicatoria (strain 85-10) (Xanthomonas campestris pv. vesicatoria).